The following is a 1068-amino-acid chain: Phosphatidylinositol 4,5-bisphosphate 3-kinase catalytic subunit alpha isoform (1068 aa).

The 90-residue stretch at 16–105 (MPPRILVECL…QPFLKVIEPV (90 aa)) folds into the PI3K-ABD domain. The PI3K-RBD domain maps to 187–289 (KGQIIVVIWV…GRMPNLMLMA (103 aa)). In terms of domain architecture, C2 PI3K-type spans 330–487 (INSALRIKIL…DWFSSVVKFP (158 aa)). Residues 517 to 694 (LARDNELREN…GLLLESYCRA (178 aa)) enclose the PIK helical domain. Residues 765–1051 (RLEECRIMSS…QMNDAHHGGW (287 aa)) form the PI3K/PI4K catalytic domain. Residues 771–777 (IMSSAKR) are G-loop. The interval 912-920 (GIGDRHNSN) is catalytic loop. The activation loop stretch occupies residues 931 to 957 (HIDFGHFLDHKKKKFGYKRERVPFVLT).

This sequence belongs to the PI3/PI4-kinase family. Heterodimer of a catalytic subunit PIK3CA and a p85 regulatory subunit (PIK3R1, PIK3R2 or PIK3R3). Interacts with IRS1 in nuclear extracts. Interacts with RUFY3. Interacts with RASD2. Interacts with APPL1. Interacts with HRAS and KRAS. Interaction with HRAS/KRAS is required for PI3K pathway signaling and cell proliferation stimulated by EGF and FGF2. Interacts with FAM83B; activates the PI3K/AKT signaling cascade.

It carries out the reaction L-seryl-[protein] + ATP = O-phospho-L-seryl-[protein] + ADP + H(+). The enzyme catalyses a 1,2-diacyl-sn-glycero-3-phospho-(1D-myo-inositol) + ATP = a 1,2-diacyl-sn-glycero-3-phospho-(1D-myo-inositol-3-phosphate) + ADP + H(+). The catalysed reaction is a 1,2-diacyl-sn-glycero-3-phospho-(1D-myo-inositol-4,5-bisphosphate) + ATP = a 1,2-diacyl-sn-glycero-3-phospho-(1D-myo-inositol-3,4,5-trisphosphate) + ADP + H(+). It catalyses the reaction 1,2-dioctanoyl-sn-glycero-3-phospho-(1D-myo-inositol-4,5-bisphosphate) + ATP = 1,2-dioctanoyl-sn-glycero-3-phospho-(1D-myo-inositol-3,4,5-trisphosphate) + ADP + H(+). It carries out the reaction 1-octadecanoyl-2-(5Z,8Z,11Z,14Z)-eicosatetraenoyl-sn-glycero-3-phospho-1D-myo-inositol 4,5-bisphosphate + ATP = 1-octadecanoyl-2-(5Z,8Z,11Z,14Z-eicosatetraenoyl)-sn-glycero-3-phospho-(1D-myo-inositol 3,4,5-triphosphate) + ADP + H(+). The protein operates within phospholipid metabolism; phosphatidylinositol phosphate biosynthesis. In terms of biological role, phosphoinositide-3-kinase (PI3K) phosphorylates phosphatidylinositol (PI) and its phosphorylated derivatives at position 3 of the inositol ring to produce 3-phosphoinositides. Uses ATP and PtdIns(4,5)P2 (phosphatidylinositol 4,5-bisphosphate) to generate phosphatidylinositol 3,4,5-trisphosphate (PIP3). PIP3 plays a key role by recruiting PH domain-containing proteins to the membrane, including AKT1 and PDPK1, activating signaling cascades involved in cell growth, survival, proliferation, motility and morphology. Participates in cellular signaling in response to various growth factors. Involved in the activation of AKT1 upon stimulation by receptor tyrosine kinases ligands such as EGF, insulin, IGF1, VEGFA and PDGF. Involved in signaling via insulin-receptor substrate (IRS) proteins. Essential in endothelial cell migration during vascular development through VEGFA signaling, possibly by regulating RhoA activity. Required for lymphatic vasculature development, possibly by binding to RAS and by activation by EGF and FGF2, but not by PDGF. Regulates invadopodia formation through the PDPK1-AKT1 pathway. Participates in cardiomyogenesis in embryonic stem cells through a AKT1 pathway. Participates in vasculogenesis in embryonic stem cells through PDK1 and protein kinase C pathway. In addition to its lipid kinase activity, it displays a serine-protein kinase activity that results in the autophosphorylation of the p85alpha regulatory subunit as well as phosphorylation of other proteins such as 4EBP1, H-Ras, the IL-3 beta c receptor and possibly others. Plays a role in the positive regulation of phagocytosis and pinocytosis. The chain is Phosphatidylinositol 4,5-bisphosphate 3-kinase catalytic subunit alpha isoform (PIK3CA) from Bos taurus (Bovine).